Consider the following 520-residue polypeptide: Probable alginate O-acetylase AlgI (520 aa).

The next 10 helical transmembrane spans lie at 7 to 24 (VFLF…YLSG), 39 to 61 (FYAW…NYWI), 78 to 100 (WLIL…NFGV), 115 to 137 (FVLT…ISYI), 150 to 172 (NLID…VLRF), 239 to 261 (LYFD…GFRF), 311 to 333 (LFLT…IWGA), 353 to 375 (VLNP…IFRA), 402 to 424 (ANLT…FFGL), and 483 to 505 (WLSQ…ASVL). H322 is an active-site residue.

The protein belongs to the membrane-bound acyltransferase family.

It localises to the cell inner membrane. It functions in the pathway glycan biosynthesis; alginate biosynthesis. Functionally, together with AlgJ and AlgF, forms an inner membrane complex which probably interacts with the alginate polymerization-transport complex and adds acetyl groups at the O-2 and O-3 positions of mannuronate residues. Acetylation of alginate is important for the architecture of biofilms and increases resistance to opsonic killing in the host. This chain is Probable alginate O-acetylase AlgI (algI), found in Pseudomonas aeruginosa (strain ATCC 15692 / DSM 22644 / CIP 104116 / JCM 14847 / LMG 12228 / 1C / PRS 101 / PAO1).